Reading from the N-terminus, the 557-residue chain is Dihydroxy-acid dehydratase (557 aa).

Residue Asp78 participates in Mg(2+) binding. Cys119 serves as a coordination point for [2Fe-2S] cluster. Mg(2+)-binding residues include Asp120 and Lys121. At Lys121 the chain carries N6-carboxylysine. Cys192 is a binding site for [2Fe-2S] cluster. Residue Glu442 coordinates Mg(2+). Residue Ser468 is the Proton acceptor of the active site.

The protein belongs to the IlvD/Edd family. As to quaternary structure, homodimer. It depends on [2Fe-2S] cluster as a cofactor. Mg(2+) is required as a cofactor.

It catalyses the reaction (2R)-2,3-dihydroxy-3-methylbutanoate = 3-methyl-2-oxobutanoate + H2O. The enzyme catalyses (2R,3R)-2,3-dihydroxy-3-methylpentanoate = (S)-3-methyl-2-oxopentanoate + H2O. The protein operates within amino-acid biosynthesis; L-isoleucine biosynthesis; L-isoleucine from 2-oxobutanoate: step 3/4. It functions in the pathway amino-acid biosynthesis; L-valine biosynthesis; L-valine from pyruvate: step 3/4. Functionally, functions in the biosynthesis of branched-chain amino acids. Catalyzes the dehydration of (2R,3R)-2,3-dihydroxy-3-methylpentanoate (2,3-dihydroxy-3-methylvalerate) into 2-oxo-3-methylpentanoate (2-oxo-3-methylvalerate) and of (2R)-2,3-dihydroxy-3-methylbutanoate (2,3-dihydroxyisovalerate) into 2-oxo-3-methylbutanoate (2-oxoisovalerate), the penultimate precursor to L-isoleucine and L-valine, respectively. This is Dihydroxy-acid dehydratase from Bacillus cereus (strain 03BB102).